Here is a 179-residue protein sequence, read N- to C-terminus: Ribosome-recycling factor (179 aa).

Belongs to the RRF family.

It is found in the cytoplasm. Responsible for the release of ribosomes from messenger RNA at the termination of protein biosynthesis. May increase the efficiency of translation by recycling ribosomes from one round of translation to another. The protein is Ribosome-recycling factor of Chlamydia muridarum (strain MoPn / Nigg).